A 178-amino-acid chain; its full sequence is uncharacterized protein (178 aa).

This is an uncharacterized protein from Schizosaccharomyces pombe (strain 972 / ATCC 24843) (Fission yeast).